The sequence spans 974 residues: Translation initiation factor IF-2 (974 aa).

The tract at residues 31–376 is disordered; the sequence is FVKSASSTVE…APAVGGVRLP (346 aa). Positions 52–68 are enriched in low complexity; that stretch reads PSAKSADSAARPAAKPG. Residues 83–96 are compositionally biased toward pro residues; sequence GPRPGPKPAAPAPA. Positions 97–133 are enriched in low complexity; that stretch reads APAAAAPAATPAAQAPAPAAPAASTATPAAPASNAPK. Residues 134–147 show a composition bias toward pro residues; it reads PGRPTPAAPAPAAP. Low complexity-rich tracts occupy residues 148–166 and 179–191; these read AAPAAPAAASTPAAPSTGA and RVGNNPYSSAPAE. 2 stretches are compositionally biased toward pro residues: residues 195–210 and 253–266; these read PRPAPGAPRPGAPRPA and RPSPGSMPPRPNPG. The span at 267–277 shows a compositional bias: low complexity; that stretch reads AMPARSARPAP. Over residues 279 to 332 the composition is skewed to gly residues; sequence GRPGRPGGAPGGRPGGGGGGYRGGGAPGAGAGAPGGGAPAGGFRGRPGGGGRPG. Over residues 349–358 the composition is skewed to basic residues; the sequence is RRGRKSKRQK. In terms of domain architecture, tr-type G spans 470 to 641; it reads SRPPVVTVMG…AVLLTADAAL (172 aa). Residues 479-486 are G1; sequence GHVDHGKT. A GTP-binding site is contributed by 479–486; that stretch reads GHVDHGKT. The G2 stretch occupies residues 504–508; sequence GITQH. The interval 529-532 is G3; sequence DTPG. GTP-binding positions include 529-533 and 583-586; these read DTPGH and NKID. The segment at 583 to 586 is G4; the sequence is NKID. Positions 619 to 621 are G5; it reads SAK.

This sequence belongs to the TRAFAC class translation factor GTPase superfamily. Classic translation factor GTPase family. IF-2 subfamily.

The protein localises to the cytoplasm. One of the essential components for the initiation of protein synthesis. Protects formylmethionyl-tRNA from spontaneous hydrolysis and promotes its binding to the 30S ribosomal subunits. Also involved in the hydrolysis of GTP during the formation of the 70S ribosomal complex. The chain is Translation initiation factor IF-2 from Rhodococcus opacus (strain B4).